We begin with the raw amino-acid sequence, 155 residues long: Protein SprT-like (155 aa).

Residues 7-145 enclose the SprT-like domain; it reads QRHMEEVSLQ…GSCGGKLIQT (139 aa). A Zn(2+)-binding site is contributed by His67. Glu68 is a catalytic residue. His71 contacts Zn(2+).

It belongs to the SprT family. Requires Zn(2+) as cofactor.

It is found in the cytoplasm. The polypeptide is Protein SprT-like (Listeria monocytogenes serovar 1/2a (strain ATCC BAA-679 / EGD-e)).